The sequence spans 206 residues: Imidazoleglycerol-phosphate dehydratase (206 aa).

This sequence belongs to the imidazoleglycerol-phosphate dehydratase family.

It localises to the cytoplasm. The enzyme catalyses D-erythro-1-(imidazol-4-yl)glycerol 3-phosphate = 3-(imidazol-4-yl)-2-oxopropyl phosphate + H2O. It participates in amino-acid biosynthesis; L-histidine biosynthesis; L-histidine from 5-phospho-alpha-D-ribose 1-diphosphate: step 6/9. This chain is Imidazoleglycerol-phosphate dehydratase, found in Cutibacterium acnes (strain DSM 16379 / KPA171202) (Propionibacterium acnes).